Consider the following 511-residue polypeptide: RNA-splicing ligase RtcB homolog (511 aa).

Residues Asp125, Cys128, His233, His265, and His359 each contribute to the Mn(2+) site. Residue 232–236 coordinates GMP; that stretch reads NHYAE. GMP is bound by residues 359–360, 408–411, Ser415, 434–437, and Lys510; these read HN, GGTM, and HGAG. His434 serves as the catalytic GMP-histidine intermediate.

Belongs to the RtcB family. As to quaternary structure, catalytic component of the tRNA-splicing ligase complex. Mn(2+) serves as cofactor.

It catalyses the reaction a 3'-end 3'-phospho-ribonucleotide-RNA + a 5'-end dephospho-ribonucleoside-RNA + GTP = a ribonucleotidyl-ribonucleotide-RNA + GMP + diphosphate. It carries out the reaction a 3'-end 2',3'-cyclophospho-ribonucleotide-RNA + a 5'-end dephospho-ribonucleoside-RNA + GTP + H2O = a ribonucleotidyl-ribonucleotide-RNA + GMP + diphosphate + H(+). In terms of biological role, catalytic subunit of the tRNA-splicing ligase complex that acts by directly joining spliced tRNA halves to mature-sized tRNAs by incorporating the precursor-derived splice junction phosphate into the mature tRNA as a canonical 3',5'-phosphodiester. May act as an RNA ligase with broad substrate specificity, and may function toward other RNAs. The chain is RNA-splicing ligase RtcB homolog from Plasmodium knowlesi (strain H).